A 91-amino-acid polypeptide reads, in one-letter code: Potassium channel toxin BuTXK-beta (91 aa).

Residues Met1–Gly20 form the signal peptide. Positions Leu21–Gln27 are excised as a propeptide. The region spanning Gln54 to Phe91 is the BetaSPN-type CS-alpha/beta domain. Intrachain disulfides connect Cys57-Cys78, Cys64-Cys83, and Cys68-Cys85.

Belongs to the long chain scorpion toxin family. Class 1 subfamily. Expressed by the venom gland.

It is found in the secreted. Functionally, inhibits voltage-gated potassium channel. The sequence is that of Potassium channel toxin BuTXK-beta from Buthus israelis (Israeli scorpion).